The primary structure comprises 132 residues: Small ribosomal subunit protein uS8 (132 aa).

This sequence belongs to the universal ribosomal protein uS8 family. As to quaternary structure, part of the 30S ribosomal subunit. Contacts proteins S5 and S12.

In terms of biological role, one of the primary rRNA binding proteins, it binds directly to 16S rRNA central domain where it helps coordinate assembly of the platform of the 30S subunit. In Francisella tularensis subsp. novicida (strain U112), this protein is Small ribosomal subunit protein uS8.